The primary structure comprises 711 residues: Constitutive ornithine decarboxylase (711 aa).

Residue Lys347 is modified to N6-(pyridoxal phosphate)lysine.

This sequence belongs to the Orn/Lys/Arg decarboxylase class-I family. The cofactor is pyridoxal 5'-phosphate.

The enzyme catalyses L-ornithine + H(+) = putrescine + CO2. Its pathway is amine and polyamine biosynthesis; putrescine biosynthesis via L-ornithine pathway; putrescine from L-ornithine: step 1/1. This is Constitutive ornithine decarboxylase (speC) from Escherichia coli (strain K12).